The chain runs to 361 residues: Histidinol-phosphate aminotransferase (361 aa).

An N6-(pyridoxal phosphate)lysine modification is found at Lys221.

This sequence belongs to the class-II pyridoxal-phosphate-dependent aminotransferase family. Histidinol-phosphate aminotransferase subfamily. In terms of assembly, homodimer. Pyridoxal 5'-phosphate is required as a cofactor.

The catalysed reaction is L-histidinol phosphate + 2-oxoglutarate = 3-(imidazol-4-yl)-2-oxopropyl phosphate + L-glutamate. It participates in amino-acid biosynthesis; L-histidine biosynthesis; L-histidine from 5-phospho-alpha-D-ribose 1-diphosphate: step 7/9. The chain is Histidinol-phosphate aminotransferase from Symbiobacterium thermophilum (strain DSM 24528 / JCM 14929 / IAM 14863 / T).